Here is a 156-residue protein sequence, read N- to C-terminus: Small ribosomal subunit protein uS7 (156 aa).

Belongs to the universal ribosomal protein uS7 family. Part of the 30S ribosomal subunit. Contacts proteins S9 and S11.

One of the primary rRNA binding proteins, it binds directly to 16S rRNA where it nucleates assembly of the head domain of the 30S subunit. Is located at the subunit interface close to the decoding center, probably blocks exit of the E-site tRNA. This Streptomyces griseus subsp. griseus (strain JCM 4626 / CBS 651.72 / NBRC 13350 / KCC S-0626 / ISP 5235) protein is Small ribosomal subunit protein uS7.